A 550-amino-acid polypeptide reads, in one-letter code: Hydroxylamine reductase (550 aa).

4 residues coordinate [2Fe-2S] cluster: C3, C6, C18, and C25. Hybrid [4Fe-2O-2S] cluster-binding residues include H249, E273, C317, C405, C433, C458, E492, and K494. C405 bears the Cysteine persulfide mark.

It belongs to the HCP family. The cofactor is [2Fe-2S] cluster. Hybrid [4Fe-2O-2S] cluster serves as cofactor.

It is found in the cytoplasm. The enzyme catalyses A + NH4(+) + H2O = hydroxylamine + AH2 + H(+). Catalyzes the reduction of hydroxylamine to form NH(3) and H(2)O. This chain is Hydroxylamine reductase, found in Salmonella agona (strain SL483).